The chain runs to 295 residues: MKQKFKRAILYARQHRANQEVNESLHRLVDFLSTQDIEIFQDSDTAASFELKTPVLPREKMGEKHDLIIVVGGDGSLLSASRMAIKVNTPVIGINRGRLGFLTDILPQDIESHLGPVLNGQYNEEERFLLHTKIYDKENSYFEGDALNDVVLGRGSETHLIEFDVYINQQLVSHYRSDGMILSTPTGSTAYALSAGGPIMHPQLNAIVLVPMFSHSLSSRPLVIDGEAEIELYISKSNETDLRISCDGHESRVVKPGQKVAVKKNGNRLRLLHPLDYHYYDTLRSKLGWESKHQG.

D74 (proton acceptor) is an active-site residue. NAD(+) is bound by residues 74–75 (DG), 148–149 (ND), H159, R176, D178, and 189–194 (TAYALS).

This sequence belongs to the NAD kinase family. It depends on a divalent metal cation as a cofactor.

It localises to the cytoplasm. The enzyme catalyses NAD(+) + ATP = ADP + NADP(+) + H(+). Functionally, involved in the regulation of the intracellular balance of NAD and NADP, and is a key enzyme in the biosynthesis of NADP. Catalyzes specifically the phosphorylation on 2'-hydroxyl of the adenosine moiety of NAD to yield NADP. The polypeptide is NAD kinase (Legionella pneumophila (strain Corby)).